A 372-amino-acid polypeptide reads, in one-letter code: Adaptive-response sensory-kinase SasA (372 aa).

The 214-residue stretch at 147–360 (MVAHELRTPL…CFHFTVPVWQ (214 aa)) folds into the Histidine kinase domain. Histidine 150 is modified (phosphohistidine; by autocatalysis).

As to quaternary structure, homooligomerizes. Interacts with KaiC. Participates in the KaiBC complex, whose core is composed of a KaiC homohexamer and 6 KaiB.

The enzyme catalyses ATP + protein L-histidine = ADP + protein N-phospho-L-histidine.. In terms of biological role, member of the two-component regulatory system SasA/RpaA involved in genome-wide circadian gene expression. One of several clock output pathways. Participates in the Kai clock protein complex, the main circadian regulator in cyanobacteria, via its interaction with KaiC. KaiC enhances the autophosphorylation activity of SasA, which then transfers its phosphate group to RpaA to activate it. In addition to its output function, recruits fold-shifted KaiB (KaiB(fs)) to KaiC to cooperatively form the KaiB(6):KaiC(6) complex (independent of SasA kinase activity). Required for robustness of the circadian rhythm of gene expression and is involved in clock output, also required for adaptation to light/dark cycles. The chain is Adaptive-response sensory-kinase SasA from Prochlorococcus marinus subsp. pastoris (strain CCMP1986 / NIES-2087 / MED4).